Consider the following 300-residue polypeptide: 33 kDa chaperonin (300 aa).

2 disulfides stabilise this stretch: C235-C237 and C269-C272.

Belongs to the HSP33 family. In terms of processing, under oxidizing conditions two disulfide bonds are formed involving the reactive cysteines. Under reducing conditions zinc is bound to the reactive cysteines and the protein is inactive.

Its subcellular location is the cytoplasm. Redox regulated molecular chaperone. Protects both thermally unfolding and oxidatively damaged proteins from irreversible aggregation. Plays an important role in the bacterial defense system toward oxidative stress. This chain is 33 kDa chaperonin, found in Pseudomonas syringae pv. syringae (strain B728a).